A 173-amino-acid polypeptide reads, in one-letter code: MERAIQRSDAREQANSERWDGRCGGTITPFKLPDESPSLLEWRLHNSEESEDKDHPLGFKESWSFGKVVFKRYLRYDGTETSLHRTLGSWERNSVNDAASRFLGVSQIGCTYSIRFRGSCLTLSGGSRTLQRLIEMAIRTKRTMLQLTPCEVEGNVSRRRPQGSEAFENKESE.

The span at 1 to 21 shows a compositional bias: basic and acidic residues; that stretch reads MERAIQRSDAREQANSERWDG. The disordered stretch occupies residues 1 to 34; the sequence is MERAIQRSDAREQANSERWDGRCGGTITPFKLPD.

This sequence belongs to the tombusvirus protein p19 family. As to quaternary structure, homodimer.

Viral suppressor of RNA silencing which binds specifically to silencing RNAs (siRNAs). Acts as a molecular caliper to specifically select siRNAs based on the length of the duplex region of the RNA. This Cucumis sativus (Cucumber) protein is RNA silencing suppressor p19.